We begin with the raw amino-acid sequence, 549 residues long: Probable protein kinase UbiB (549 aa).

A Protein kinase domain is found at 123-501 (DFDDIPLASA…QQKAHKSNYL (379 aa)). Residues 129-137 (LASASISQV) and K152 each bind ATP. Residue D287 is the Proton acceptor of the active site. Helical transmembrane passes span 498 to 518 (SNYL…LINQ) and 520 to 540 (ATLW…VLGW).

It belongs to the ABC1 family. UbiB subfamily.

It is found in the cell inner membrane. It functions in the pathway cofactor biosynthesis; ubiquinone biosynthesis [regulation]. In terms of biological role, is probably a protein kinase regulator of UbiI activity which is involved in aerobic coenzyme Q (ubiquinone) biosynthesis. The chain is Probable protein kinase UbiB from Shewanella halifaxensis (strain HAW-EB4).